A 219-amino-acid chain; its full sequence is Probable transaldolase (219 aa).

Lys-83 (schiff-base intermediate with substrate) is an active-site residue.

This sequence belongs to the transaldolase family. Type 3B subfamily.

It is found in the cytoplasm. The enzyme catalyses D-sedoheptulose 7-phosphate + D-glyceraldehyde 3-phosphate = D-erythrose 4-phosphate + beta-D-fructose 6-phosphate. The protein operates within carbohydrate degradation; pentose phosphate pathway; D-glyceraldehyde 3-phosphate and beta-D-fructose 6-phosphate from D-ribose 5-phosphate and D-xylulose 5-phosphate (non-oxidative stage): step 2/3. In terms of biological role, transaldolase is important for the balance of metabolites in the pentose-phosphate pathway. The polypeptide is Probable transaldolase (Cereibacter sphaeroides (strain ATCC 17025 / ATH 2.4.3) (Rhodobacter sphaeroides)).